The chain runs to 38 residues: Large ribosomal subunit protein bL36A (38 aa).

Belongs to the bacterial ribosomal protein bL36 family.

This is Large ribosomal subunit protein bL36A from Pseudomonas aeruginosa (strain UCBPP-PA14).